The following is a 454-amino-acid chain: MAAKPGIPKGTRDFSPVEMAKRNYIFNTIRDVFHLFGYQQIETPSMENLSTLMGKYGDEGDKLLFKIQNSGDYFNGITDEELLSRNAVKLASKFCEKGLRYDLTVPFARYVVMHRDEISFPFKRYQIQPVWRADRPQKGRYREFYQCDADVVGSNSLLNEVELVQMIDRVFGKFGVRVSIKINNRKILTGIAEIIGEADKIVDITVAIDKLDKIGLENVNAELASKGIPQEAIDKLQPIILLSGSNEEKLETLKTVLATSEAGLKGVEESEFILKTVSALGVKSEVELDLTLARGLNYYTGAIFEVKALDVQIGSISGGGRYDNLTGVFGMDGMSGVGISFGADRIFDVLNQLDLYPKEAVNGTELLFVNFGDKEAAYCLPILTKVREAGVRAEIYPDASKMKKQMGYANDKQIPFVAIVGENEMNEGKLTLKNMTTGEQSLVTPDELLAVVKA.

This sequence belongs to the class-II aminoacyl-tRNA synthetase family. As to quaternary structure, homodimer.

Its subcellular location is the cytoplasm. The enzyme catalyses tRNA(His) + L-histidine + ATP = L-histidyl-tRNA(His) + AMP + diphosphate + H(+). This chain is Histidine--tRNA ligase, found in Phocaeicola vulgatus (strain ATCC 8482 / DSM 1447 / JCM 5826 / CCUG 4940 / NBRC 14291 / NCTC 11154) (Bacteroides vulgatus).